Consider the following 557-residue polypeptide: MKAILRASRIGRVILRYRLDALLEGTPAERWLRLAKPFVPRASAEIAVQSRGARLRLALQELGPIFVKFGQILSTRRDLIPADVAEELTLLQDRVKPFDGEAARLIVERALGLPVSVAFASFDTVPLASASIAQVHAATLPPDANGVRREVVVKVLRPEIERQIDADIALLHSLATLVERTHPRADKIRPREVVAEIEGTLSAELDLQREGANASVLRRFWEGSDDLYVPEVIWSHTAERALTLERVYGIPSDDIAKLDAAGIDRKALAAKGVRVFYTQVFRDNFFHADAHAGNIWVDSDPERRLNPRFIALDFGIMGQLSQEDQYYLAENFMAIFHKDYRRMAELHVEAGWMPSNVRIDELEAAARSVCEPYFTRPLSEISLAQVLIKLFRVAQRYELTLQPQLILLQKTLLNIEGVGRQLDPKLDIWAVARPVLERILRERYSPRRVLRELSKRLPEIMTHAPDMPRLVHSWLKQQVEGRHQIDIRSTELLALDLSLRKLQTRVVTAITGSGLLVVAAVLYGLHPDGWYLGTVPVWSWISGGAGSAALLVAWLRR.

In terms of domain architecture, Protein kinase spans 121–509 (SFDTVPLASA…RKLQTRVVTA (389 aa)). Residues 127–135 (LASASIAQV) and Lys154 contribute to the ATP site. Asp289 functions as the Proton acceptor in the catalytic mechanism. 2 consecutive transmembrane segments (helical) span residues 506–526 (VVTAITGSGLLVVAAVLYGLH) and 535–555 (VPVWSWISGGAGSAALLVAWL).

The protein belongs to the ABC1 family. UbiB subfamily.

The protein resides in the cell inner membrane. It functions in the pathway cofactor biosynthesis; ubiquinone biosynthesis [regulation]. Functionally, is probably a protein kinase regulator of UbiI activity which is involved in aerobic coenzyme Q (ubiquinone) biosynthesis. The polypeptide is Probable protein kinase UbiB (Xanthomonas oryzae pv. oryzae (strain MAFF 311018)).